Here is a 323-residue protein sequence, read N- to C-terminus: Beta-ketoacyl-[acyl-carrier-protein] synthase III (323 aa).

Catalysis depends on residues Cys114 and His250. Residues 251–255 form an ACP-binding region; the sequence is QANIR. Asn280 is an active-site residue.

The protein belongs to the thiolase-like superfamily. FabH family. In terms of assembly, homodimer.

It is found in the cytoplasm. The enzyme catalyses malonyl-[ACP] + acetyl-CoA + H(+) = 3-oxobutanoyl-[ACP] + CO2 + CoA. Its pathway is lipid metabolism; fatty acid biosynthesis. In terms of biological role, catalyzes the condensation reaction of fatty acid synthesis by the addition to an acyl acceptor of two carbons from malonyl-ACP. Catalyzes the first condensation reaction which initiates fatty acid synthesis and may therefore play a role in governing the total rate of fatty acid production. Possesses both acetoacetyl-ACP synthase and acetyl transacylase activities. Its substrate specificity determines the biosynthesis of branched-chain and/or straight-chain of fatty acids. This chain is Beta-ketoacyl-[acyl-carrier-protein] synthase III, found in Ruegeria pomeroyi (strain ATCC 700808 / DSM 15171 / DSS-3) (Silicibacter pomeroyi).